Reading from the N-terminus, the 314-residue chain is tRNA pseudouridine synthase B (314 aa).

Substrate is bound at residue His-43. Asp-48 serves as the catalytic Nucleophile. The substrate site is built by Tyr-76, Tyr-179, and Leu-200.

It belongs to the pseudouridine synthase TruB family. Type 1 subfamily.

It catalyses the reaction uridine(55) in tRNA = pseudouridine(55) in tRNA. Its function is as follows. Responsible for synthesis of pseudouridine from uracil-55 in the psi GC loop of transfer RNAs. This chain is tRNA pseudouridine synthase B, found in Salmonella paratyphi B (strain ATCC BAA-1250 / SPB7).